Reading from the N-terminus, the 349-residue chain is Protein Wnt-7b (349 aa).

A signal peptide spans 1–24; the sequence is MHRNFRKWIFYVFLCFGVLYVKLG. 5 disulfide bridges follow: Cys-73–Cys-84, Cys-123–Cys-131, Cys-133–Cys-152, Cys-200–Cys-214, and Cys-202–Cys-209. 2 N-linked (GlcNAc...) asparagine glycosylation sites follow: Asn-83 and Asn-127. Residue Ser-206 is the site of O-palmitoleoyl serine; by PORCN attachment. Positions 238-266 are disordered linker; sequence VEVVRASRLRQPTFLRIKQLRSYQKPMET. Intrachain disulfides connect Cys-278–Cys-309, Cys-294–Cys-304, Cys-308–Cys-348, Cys-324–Cys-339, Cys-326–Cys-336, and Cys-331–Cys-332. N-linked (GlcNAc...) asparagine glycosylation is present at Asn-295.

This sequence belongs to the Wnt family. As to quaternary structure, forms a soluble 1:1 complex with AFM; this prevents oligomerization and is required for prolonged biological activity. The complex with AFM may represent the physiological form in body fluids. Interacts with FZD1 and FZD10. Interacts with FZD4 (in vitro). Interacts with PORCN. Interacts with glypican GPC3. Interacts (via intrinsically disordered linker region) with RECK; interaction with RECK confers ligand selectivity for Wnt7 in brain endothelial cells and allows these cells to selectively respond to Wnt7. In terms of processing, palmitoleoylation is required for efficient binding to frizzled receptors. Depalmitoleoylation leads to Wnt signaling pathway inhibition.

It localises to the secreted. It is found in the extracellular space. Its subcellular location is the extracellular matrix. In terms of biological role, ligand for members of the frizzled family of seven transmembrane receptors that functions in the canonical Wnt/beta-catenin signaling pathway. Required for normal fusion of the chorion and the allantois during placenta development. Required for central nervous system (CNS) angiogenesis and blood-brain barrier regulation. This chain is Protein Wnt-7b (Wnt7b), found in Mus musculus (Mouse).